A 76-amino-acid polypeptide reads, in one-letter code: uORF2 protein (76 aa).

Plays a role in viral replication. The sequence is that of uORF2 protein from Homo sapiens (Human).